The following is a 1079-amino-acid chain: Carbamoyl phosphate synthase large chain (1079 aa).

The segment at 2–403 (PKSTDIKSIL…SIQKAIRGLE (402 aa)) is carboxyphosphate synthetic domain. The ATP site is built by R129, R169, G175, G176, E208, L210, E215, G241, I242, H243, Q285, and E299. One can recognise an ATP-grasp 1 domain in the interval 133–328 (EHSMKKLNLE…IAKIAAKLAI (196 aa)). Mg(2+)-binding residues include Q285, E299, and N301. Residues Q285, E299, and N301 each coordinate Mn(2+). Residues 404–553 (VGASGFDSKI…YSTWEDECES (150 aa)) form an oligomerization domain region. The interval 554 to 936 (HPSKNNKKII…AFSKSMLGAH (383 aa)) is carbamoyl phosphate synthetic domain. The 192-residue stretch at 679 to 870 (QKTVNKLRLQ…LAKISVRVMC (192 aa)) folds into the ATP-grasp 2 domain. ATP contacts are provided by R715, Q754, L756, E761, G786, V787, H788, S789, Q829, and E841. Q829, E841, and N843 together coordinate Mg(2+). 3 residues coordinate Mn(2+): Q829, E841, and N843. The MGS-like domain occupies 937–1079 (TNMKKSGRVL…KKIQLFYTKK (143 aa)). Residues 937–1079 (TNMKKSGRVL…KKIQLFYTKK (143 aa)) form an allosteric domain region.

This sequence belongs to the CarB family. As to quaternary structure, composed of two chains; the small (or glutamine) chain promotes the hydrolysis of glutamine to ammonia, which is used by the large (or ammonia) chain to synthesize carbamoyl phosphate. Tetramer of heterodimers (alpha,beta)4. The cofactor is Mg(2+). Mn(2+) is required as a cofactor.

The catalysed reaction is hydrogencarbonate + L-glutamine + 2 ATP + H2O = carbamoyl phosphate + L-glutamate + 2 ADP + phosphate + 2 H(+). The enzyme catalyses hydrogencarbonate + NH4(+) + 2 ATP = carbamoyl phosphate + 2 ADP + phosphate + 2 H(+). It functions in the pathway amino-acid biosynthesis; L-arginine biosynthesis; carbamoyl phosphate from bicarbonate: step 1/1. It participates in pyrimidine metabolism; UMP biosynthesis via de novo pathway; (S)-dihydroorotate from bicarbonate: step 1/3. Large subunit of the glutamine-dependent carbamoyl phosphate synthetase (CPSase). CPSase catalyzes the formation of carbamoyl phosphate from the ammonia moiety of glutamine, carbonate, and phosphate donated by ATP, constituting the first step of 2 biosynthetic pathways, one leading to arginine and/or urea and the other to pyrimidine nucleotides. The large subunit (synthetase) binds the substrates ammonia (free or transferred from glutamine from the small subunit), hydrogencarbonate and ATP and carries out an ATP-coupled ligase reaction, activating hydrogencarbonate by forming carboxy phosphate which reacts with ammonia to form carbamoyl phosphate. This is Carbamoyl phosphate synthase large chain from Buchnera aphidicola subsp. Acyrthosiphon pisum (strain APS) (Acyrthosiphon pisum symbiotic bacterium).